Here is a 72-residue protein sequence, read N- to C-terminus: Protein RALF-like 11 (72 aa).

Positions 1-17 (MKAWLICLLVICAAVIA) are cleaved as a signal peptide. Disulfide bonds link cysteine 34-cysteine 43 and cysteine 63-cysteine 69.

The protein belongs to the plant rapid alkalinization factor (RALF) family.

Its subcellular location is the secreted. Cell signaling peptide that may regulate plant stress, growth, and development. Mediates a rapid alkalinization of extracellular space by mediating a transient increase in the cytoplasmic Ca(2+) concentration leading to a calcium-dependent signaling events through a cell surface receptor and a concomitant activation of some intracellular mitogen-activated protein kinases. The polypeptide is Protein RALF-like 11 (RALFL11) (Arabidopsis thaliana (Mouse-ear cress)).